A 533-amino-acid polypeptide reads, in one-letter code: 2-isopropylmalate synthase (533 aa).

Positions 8–270 (VIIFDTTLRD…YFNPFLGRPA (263 aa)) constitute a Pyruvate carboxyltransferase domain. Mn(2+) is bound by residues Asp17, His209, His211, and Asn245. A regulatory domain region spans residues 409-533 (RLELVQVSCG…KEKTPEMLQV (125 aa)).

It belongs to the alpha-IPM synthase/homocitrate synthase family. LeuA type 1 subfamily. As to quaternary structure, homodimer. The cofactor is Mn(2+).

The protein resides in the cytoplasm. The catalysed reaction is 3-methyl-2-oxobutanoate + acetyl-CoA + H2O = (2S)-2-isopropylmalate + CoA + H(+). Its pathway is amino-acid biosynthesis; L-leucine biosynthesis; L-leucine from 3-methyl-2-oxobutanoate: step 1/4. In terms of biological role, catalyzes the condensation of the acetyl group of acetyl-CoA with 3-methyl-2-oxobutanoate (2-ketoisovalerate) to form 3-carboxy-3-hydroxy-4-methylpentanoate (2-isopropylmalate). This chain is 2-isopropylmalate synthase, found in Microcystis aeruginosa.